The following is a 331-amino-acid chain: Putative peptidyl-prolyl cis-trans isomerase RF_0616 (331 aa).

The segment at 28 to 50 is disordered; it reads NPTTIEQTASNNSSTDENQTSIN. Residues 128–226 form the PPIase FKBP-type domain; sequence GHVVTVFYQI…NNEVKIYDDE (99 aa).

The catalysed reaction is [protein]-peptidylproline (omega=180) = [protein]-peptidylproline (omega=0). This Rickettsia felis (strain ATCC VR-1525 / URRWXCal2) (Rickettsia azadi) protein is Putative peptidyl-prolyl cis-trans isomerase RF_0616.